A 308-amino-acid polypeptide reads, in one-letter code: MPDNMPEEQAHPTRCGFVALIGAPNVGKSTLVNALVGSKVTIVSRKVQTTRALIRGIVVEGNAQIVLVDTPGIFTPKRRLDRAMVSTAWSGAHDADMVCVLLDARAGLDEEAEAIFTKLEAVKHPKFLVINKIDLVAREKLLALAQRANERIAFRETFMVAALSGDGVDDLRRALAAAMPEGPYLYPEDQMSDAPLRHLAAEITREKIYRNLHQELPYQSTVETESWKEMRNGSVRIEQTIFVERDSQRKIVLGKGGATIKAIGADARKEIAEIVGQPVHLFLFVKVRDNWGDDPERYREMGLEFPKE.

An Era-type G domain is found at 14-181 (RCGFVALIGA…RRALAAAMPE (168 aa)). The segment at 22-29 (GAPNVGKS) is G1. Position 22–29 (22–29 (GAPNVGKS)) interacts with GTP. Residues 48–52 (QTTRA) are G2. Positions 69–72 (DTPG) are G3. GTP-binding positions include 69–73 (DTPGI) and 131–134 (NKID). Residues 131-134 (NKID) form a G4 region. The G5 stretch occupies residues 160-162 (VAA). Residues 212–289 (LHQELPYQST…HLFLFVKVRD (78 aa)) form the KH type-2 domain.

Belongs to the TRAFAC class TrmE-Era-EngA-EngB-Septin-like GTPase superfamily. Era GTPase family. As to quaternary structure, monomer.

It is found in the cytoplasm. Its subcellular location is the cell inner membrane. Its function is as follows. An essential GTPase that binds both GDP and GTP, with rapid nucleotide exchange. Plays a role in 16S rRNA processing and 30S ribosomal subunit biogenesis and possibly also in cell cycle regulation and energy metabolism. In Afipia carboxidovorans (strain ATCC 49405 / DSM 1227 / KCTC 32145 / OM5) (Oligotropha carboxidovorans), this protein is GTPase Era.